Consider the following 210-residue polypeptide: Outer-membrane lipoprotein LolB (210 aa).

The N-terminal stretch at 1 to 18 is a signal peptide; that stretch reads MKKFTKILSLSTLLFLAG. C19 is lipidated: N-palmitoyl cysteine. C19 is lipidated: S-diacylglycerol cysteine.

Belongs to the LolB family. In terms of assembly, monomer.

It localises to the cell outer membrane. Plays a critical role in the incorporation of lipoproteins in the outer membrane after they are released by the LolA protein. The sequence is that of Outer-membrane lipoprotein LolB from Actinobacillus pleuropneumoniae serotype 5b (strain L20).